The following is a 216-amino-acid chain: GTP cyclohydrolase 1 (216 aa).

Zn(2+)-binding residues include Cys-109, His-112, and Cys-180.

It belongs to the GTP cyclohydrolase I family. In terms of assembly, homomer.

The enzyme catalyses GTP + H2O = 7,8-dihydroneopterin 3'-triphosphate + formate + H(+). It participates in cofactor biosynthesis; 7,8-dihydroneopterin triphosphate biosynthesis; 7,8-dihydroneopterin triphosphate from GTP: step 1/1. The protein is GTP cyclohydrolase 1 of Tolumonas auensis (strain DSM 9187 / NBRC 110442 / TA 4).